Reading from the N-terminus, the 1009-residue chain is Rho GTPase-activating protein gacT (1009 aa).

Disordered regions lie at residues 1-72 and 89-117; these read MKNI…SRNH and TSHH…QQTQ. A compositionally biased stretch (basic and acidic residues) spans 12–23; the sequence is FHKDKKEGDKQD. Positions 26–35 are enriched in low complexity; it reads GSSGSSGNSG. Residues 58 to 69 are compositionally biased toward polar residues; sequence ESYSGDNSPTLS. The segment covering 89–103 has biased composition (basic residues); the sequence is TSHHSHSHNHNHNHN. Over residues 104–117 the composition is skewed to low complexity; the sequence is HQLTQPIQQQQQTQ. The region spanning 163-351 is the Rho-GAP domain; the sequence is VPLTQVPCRA…EVFPQHHLYY (189 aa). Disordered regions lie at residues 388–420, 432–482, and 508–571; these read TISG…DSTA, PEQQ…TFRV, and GPSG…TTDQ. Low complexity-rich tracts occupy residues 394 to 415, 432 to 468, and 512 to 521; these read PSNG…ITSP, PEQQ…QPIS, and TTGTTPNGGS. A compositionally biased stretch (gly residues) spans 522–546; sequence LSIGGGNGGNGGSSLSVGSGGGNGG. The segment covering 547–557 has biased composition (low complexity); sequence SSLSVGSNTSV. Positions 580–656 form a coiled coil; it reads AYTNNEDTKA…IEREIEKKRL (77 aa). The segment at 686–713 is disordered; it reads ISTIDGSGGSNRNSKNYGNGSSSSSNRR. Residues 695–713 show a composition bias toward low complexity; sequence SNRNSKNYGNGSSSSSNRR. Residues 715 to 743 adopt a coiled-coil conformation; that stretch reads SNTINQQLQMQLQQLQIQQQQYQQTQQSQ. The interval 759–781 is disordered; it reads TTTTTTTSSGSNRFSSNRYKPVD. The segment covering 766–781 has biased composition (polar residues); that stretch reads SSGSNRFSSNRYKPVD. The stretch at 839 to 952 forms a coiled coil; it reads ENLVLLQQQY…IEEIHLLETY (114 aa). Residues 965 to 1009 form a disordered region; that stretch reads STTKDLLTRSRSPTLPSSINMSTSSLGSSSSSAYNNNNNNNNVPK. The span at 967 to 980 shows a compositional bias: polar residues; the sequence is TKDLLTRSRSPTLP. Positions 981–1009 are enriched in low complexity; it reads SSINMSTSSLGSSSSSAYNNNNNNNNVPK.

The protein localises to the cytoplasm. Functionally, rho GTPase-activating protein involved in the signal transduction pathway. This Dictyostelium discoideum (Social amoeba) protein is Rho GTPase-activating protein gacT (gacT).